The primary structure comprises 128 residues: Large ribosomal subunit protein bL12 (128 aa).

It belongs to the bacterial ribosomal protein bL12 family. Homodimer. Part of the ribosomal stalk of the 50S ribosomal subunit. Forms a multimeric L10(L12)X complex, where L10 forms an elongated spine to which 2 to 4 L12 dimers bind in a sequential fashion. Binds GTP-bound translation factors.

Its function is as follows. Forms part of the ribosomal stalk which helps the ribosome interact with GTP-bound translation factors. Is thus essential for accurate translation. This chain is Large ribosomal subunit protein bL12, found in Acidithiobacillus ferrooxidans (strain ATCC 23270 / DSM 14882 / CIP 104768 / NCIMB 8455) (Ferrobacillus ferrooxidans (strain ATCC 23270)).